We begin with the raw amino-acid sequence, 141 residues long: HSECLTGDALGSLKCDCGEQLEFALQNISLLGGMIIYLRQEGRNIGLFNKVNAYALQDQGFDTIEANHQLGFKSDERSYEVVETILEHFKIDKIRLLTNNPKKMSCLKNIMIIERWPIIIPSNNHNVDYLKTKKEMMGHLL.

A GTP-binding site is contributed by 1-3; it reads HSE. The Zn(2+) site is built by Cys4, Cys15, and Cys17. GTP is bound by residues Gln20, 41 to 43, and Thr63; that span reads EGR. Asp75 (proton acceptor) is an active-site residue. The active-site Nucleophile is the Arg77. GTP contacts are provided by Thr98 and Lys103.

Belongs to the GTP cyclohydrolase II family. Requires Zn(2+) as cofactor.

It carries out the reaction GTP + 4 H2O = 2,5-diamino-6-hydroxy-4-(5-phosphoribosylamino)-pyrimidine + formate + 2 phosphate + 3 H(+). It functions in the pathway cofactor biosynthesis; riboflavin biosynthesis; 5-amino-6-(D-ribitylamino)uracil from GTP: step 1/4. Functionally, catalyzes the conversion of GTP to 2,5-diamino-6-ribosylamino-4(3H)-pyrimidinone 5'-phosphate (DARP), formate and pyrophosphate. The chain is GTP cyclohydrolase-2 (ribA) from Sulfurospirillum multivorans (Dehalospirillum multivorans).